We begin with the raw amino-acid sequence, 340 residues long: MMKIVIDLMGADHGVLPIIEGVSRALENKSFSAVLVGDKDKATPFISKELASKVEMIHTQDYIKMEEAATEAIKRKESSIYLGMDILKNGADALISAGHSGATMGLATLRLGRIKGVERPAICTLMPSVGKRPSVLLDAGANTDCKPEYLIDFALMGYEYAKSVLHYDSPKVGLLSNGEEDIKGNMLVKETHKMLKAYDFFYGNVEGSDIFKGVVDVVVCDGFMGNVVLKTTEGVASAIGSIFKDEIKSSFKSKMGALMLRNAFDILKQKTDYAEYGGAPLLGVNKSVIISHGKSNARAVECAIYQAISAVESQVCLRITQAFESLKPSVSAHQSDQQDA.

This sequence belongs to the PlsX family. In terms of assembly, homodimer. Probably interacts with PlsY.

Its subcellular location is the cytoplasm. It catalyses the reaction a fatty acyl-[ACP] + phosphate = an acyl phosphate + holo-[ACP]. It functions in the pathway lipid metabolism; phospholipid metabolism. Catalyzes the reversible formation of acyl-phosphate (acyl-PO(4)) from acyl-[acyl-carrier-protein] (acyl-ACP). This enzyme utilizes acyl-ACP as fatty acyl donor, but not acyl-CoA. This is Phosphate acyltransferase from Helicobacter pylori (strain HPAG1).